We begin with the raw amino-acid sequence, 186 residues long: MNTIRNSICLTIITMVLCGFLFPLAITLIGQIFFYQQANGSLITYDNRIVGSKLIGQHWTETRYFHGRPSAVDYNMNPEKLYKNGVSSGGSNESNGNTELIARMKHHVKFGNSNVTIDAATSSGSGLDPHITVENALKQAPRIADARHISTSRVADLIQHRKQRGVLTNDYVNVLELNIALDKMKD.

The chain crosses the membrane as a helical span at residues 10–30; that stretch reads LTIITMVLCGFLFPLAITLIG.

The protein belongs to the KdpC family. In terms of assembly, the system is composed of three essential subunits: KdpA, KdpB and KdpC.

It localises to the cell membrane. Its function is as follows. Part of the high-affinity ATP-driven potassium transport (or Kdp) system, which catalyzes the hydrolysis of ATP coupled with the electrogenic transport of potassium into the cytoplasm. This subunit acts as a catalytic chaperone that increases the ATP-binding affinity of the ATP-hydrolyzing subunit KdpB by the formation of a transient KdpB/KdpC/ATP ternary complex. The chain is Potassium-transporting ATPase KdpC subunit from Staphylococcus aureus (strain MSSA476).